The primary structure comprises 208 residues: FMN-dependent NADH:quinone oxidoreductase 1 (208 aa).

An FMN-binding site is contributed by Ser10.

It belongs to the azoreductase type 1 family. In terms of assembly, homodimer. FMN is required as a cofactor.

It catalyses the reaction 2 a quinone + NADH + H(+) = 2 a 1,4-benzosemiquinone + NAD(+). The catalysed reaction is N,N-dimethyl-1,4-phenylenediamine + anthranilate + 2 NAD(+) = 2-(4-dimethylaminophenyl)diazenylbenzoate + 2 NADH + 2 H(+). Functionally, quinone reductase that provides resistance to thiol-specific stress caused by electrophilic quinones. Contributes to resistance to 2-methylhydroquinone (2-MHQ) and catechol. Also exhibits azoreductase activity. Catalyzes the reductive cleavage of the azo bond in aromatic azo compounds to the corresponding amines. The polypeptide is FMN-dependent NADH:quinone oxidoreductase 1 (Bacillus subtilis (strain 168)).